Here is a 338-residue protein sequence, read N- to C-terminus: MDKGKKVETVEKQENSLPWVEKYRPTTLDEVAGHEGVITTIKKFVEEGKLPHLLFHGPPGTGKTTTIIAVARQIYGKNYRNMILELNASDERGIDVVRDQIKTFASTRQIFSSGFKLVILDEADAMTNAAQNALRRIIEKYSAHTRFCILANYTHKLNPALLSRCTRFRFSPLKEDAIKHRLAHVIEQESVDLSPEAFQSLLHLSSGDMRRALNVLQACYASVDAGEQISEELVYDCVGSPRPADIRTVLQAVLDGSWESALHTFSYIKQSKGLALADMLTAFAVEFQKLDLQNKTRIALLDGLSEIEWRLSSGGNESIQTSATIGVIKQSMELEASS.

Gly-57–Thr-64 is a binding site for ATP.

This sequence belongs to the activator 1 small subunits family. Heteropentamer of subunits RFC1, RFC2, RFC3, RFC4 and RFC5 that forms a complex with PCNA in the presence of ATP.

The protein resides in the nucleus. Its function is as follows. The elongation of primed DNA templates by DNA polymerase delta and epsilon requires the action of the accessory proteins proliferating cell nuclear antigen (PCNA) and activator 1. Subunit 3 binds ATP. This is Replication factor C subunit 3 (RFC3) from Blastobotrys adeninivorans (Yeast).